An 833-amino-acid polypeptide reads, in one-letter code: Leucine--tRNA ligase (833 aa).

The short motif at P41–H52 is the 'HIGH' region element. A 'KMSKS' region motif is present at residues K610 to S614. Position 613 (K613) interacts with ATP.

This sequence belongs to the class-I aminoacyl-tRNA synthetase family.

The protein localises to the cytoplasm. It carries out the reaction tRNA(Leu) + L-leucine + ATP = L-leucyl-tRNA(Leu) + AMP + diphosphate. This is Leucine--tRNA ligase from Streptococcus gordonii (strain Challis / ATCC 35105 / BCRC 15272 / CH1 / DL1 / V288).